An 852-amino-acid polypeptide reads, in one-letter code: Translation initiation factor IF-2 (852 aa).

Positions 1 to 240 (MEDKNKTIKE…KTSSDKRDFS (240 aa)) are disordered. Residues 78–90 (KEVKYEESSRKQD) show a composition bias toward basic and acidic residues. The segment covering 106–120 (VRPSGDSSYPVSRSP) has biased composition (polar residues). The span at 150 to 200 (RGPGQGGGYQGNRGPGQGGGYQGNRGPGQQTGPGNRFGGSGPGNRSGGPGG) shows a compositional bias: gly residues. The span at 227 to 240 (HDKEKTSSDKRDFS) shows a compositional bias: basic and acidic residues. In terms of domain architecture, tr-type G spans 347–516 (NRPPVVTIMG…LLQAEVMDLK (170 aa)). The G1 stretch occupies residues 356 to 363 (GHVDHGKT). 356–363 (GHVDHGKT) contacts GTP. The G2 stretch occupies residues 381 to 385 (GITQH). Positions 402 to 405 (DTPG) are G3. GTP contacts are provided by residues 402-406 (DTPGH) and 456-459 (NKID). The tract at residues 456-459 (NKID) is G4. The interval 492–494 (SAR) is G5.

This sequence belongs to the TRAFAC class translation factor GTPase superfamily. Classic translation factor GTPase family. IF-2 subfamily.

It localises to the cytoplasm. Functionally, one of the essential components for the initiation of protein synthesis. Protects formylmethionyl-tRNA from spontaneous hydrolysis and promotes its binding to the 30S ribosomal subunits. Also involved in the hydrolysis of GTP during the formation of the 70S ribosomal complex. This is Translation initiation factor IF-2 from Leptospira borgpetersenii serovar Hardjo-bovis (strain JB197).